The primary structure comprises 243 residues: Undecaprenyl-phosphate mannosyltransferase (243 aa).

The protein belongs to the glycosyltransferase 2 family.

The catalysed reaction is di-trans,octa-cis-undecaprenyl phosphate + GDP-alpha-D-mannose = D-mannosyl di-trans,octa-cis-undecaprenyl phosphate + GDP. Its function is as follows. Catalyzes the transfer of mannose from GDP-mannose to D-mannosyl-1-phosphoundecaprenol. In Micrococcus luteus (strain ATCC 4698 / DSM 20030 / JCM 1464 / CCM 169 / CCUG 5858 / IAM 1056 / NBRC 3333 / NCIMB 9278 / NCTC 2665 / VKM Ac-2230) (Micrococcus lysodeikticus), this protein is Undecaprenyl-phosphate mannosyltransferase.